The following is a 185-amino-acid chain: Adenine phosphoribosyltransferase (185 aa).

This sequence belongs to the purine/pyrimidine phosphoribosyltransferase family. Homodimer.

Its subcellular location is the cytoplasm. It catalyses the reaction AMP + diphosphate = 5-phospho-alpha-D-ribose 1-diphosphate + adenine. The protein operates within purine metabolism; AMP biosynthesis via salvage pathway; AMP from adenine: step 1/1. In terms of biological role, catalyzes a salvage reaction resulting in the formation of AMP, that is energically less costly than de novo synthesis. In Aliarcobacter butzleri (strain RM4018) (Arcobacter butzleri), this protein is Adenine phosphoribosyltransferase.